Reading from the N-terminus, the 384-residue chain is Mitogen-activated protein kinase 8 (384 aa).

A Protein kinase domain is found at 26–321; that stretch reads YQNLRPIGSG…VDEALQHPYI (296 aa). ATP-binding positions include 33-38 and lysine 55; that span reads GSGAQG. Aspartate 151 acts as the Proton acceptor in catalysis. The residue at position 183 (threonine 183) is a Phosphothreonine. A TXY motif is present at residues 183–185; the sequence is TPY. At tyrosine 185 the chain carries Phosphotyrosine.

This sequence belongs to the protein kinase superfamily. CMGC Ser/Thr protein kinase family. MAP kinase subfamily. It depends on Mg(2+) as a cofactor. Dually phosphorylated on Thr-183 and Tyr-185, which activates the enzyme.

It is found in the cytoplasm. It localises to the nucleus. The protein localises to the synapse. It carries out the reaction L-seryl-[protein] + ATP = O-phospho-L-seryl-[protein] + ADP + H(+). The enzyme catalyses L-threonyl-[protein] + ATP = O-phospho-L-threonyl-[protein] + ADP + H(+). Its activity is regulated as follows. Activated by threonine and tyrosine phosphorylation. Functionally, responds to activation by environmental stress and pro-inflammatory cytokines by phosphorylating a number of transcription factors, primarily components of AP-1 such as c-Jun and ATF2 and thus regulates AP-1 transcriptional activity. May play a role in the regulation of the circadian clock. The protein is Mitogen-activated protein kinase 8 (mapk8) of Danio rerio (Zebrafish).